The following is a 201-amino-acid chain: Recombination protein RecR (201 aa).

The segment at 57-72 (CADCRTFTEQEVCNIC) adopts a C4-type zinc-finger fold. The 96-residue stretch at 81–176 (GQICVVESPA…EASRIAHGVP (96 aa)) folds into the Toprim domain.

This sequence belongs to the RecR family.

In terms of biological role, may play a role in DNA repair. It seems to be involved in an RecBC-independent recombinational process of DNA repair. It may act with RecF and RecO. The protein is Recombination protein RecR of Escherichia coli O17:K52:H18 (strain UMN026 / ExPEC).